The chain runs to 256 residues: Triosephosphate isomerase (256 aa).

Residue Asn-9–Lys-11 participates in substrate binding. Catalysis depends on His-97, which acts as the Electrophile. Glu-169 serves as the catalytic Proton acceptor. Substrate is bound by residues Gly-175, Ser-214, and Gly-235–Gly-236.

The protein belongs to the triosephosphate isomerase family. Homodimer.

The protein resides in the cytoplasm. The catalysed reaction is D-glyceraldehyde 3-phosphate = dihydroxyacetone phosphate. The protein operates within carbohydrate biosynthesis; gluconeogenesis. It functions in the pathway carbohydrate degradation; glycolysis; D-glyceraldehyde 3-phosphate from glycerone phosphate: step 1/1. In terms of biological role, involved in the gluconeogenesis. Catalyzes stereospecifically the conversion of dihydroxyacetone phosphate (DHAP) to D-glyceraldehyde-3-phosphate (G3P). In Aliivibrio fischeri (strain ATCC 700601 / ES114) (Vibrio fischeri), this protein is Triosephosphate isomerase.